The chain runs to 581 residues: 2-succinyl-5-enolpyruvyl-6-hydroxy-3-cyclohexene-1-carboxylate synthase (581 aa).

The protein belongs to the TPP enzyme family. MenD subfamily. As to quaternary structure, homodimer. It depends on Mg(2+) as a cofactor. Requires Mn(2+) as cofactor. Thiamine diphosphate is required as a cofactor.

The enzyme catalyses isochorismate + 2-oxoglutarate + H(+) = 5-enolpyruvoyl-6-hydroxy-2-succinyl-cyclohex-3-ene-1-carboxylate + CO2. It functions in the pathway quinol/quinone metabolism; 1,4-dihydroxy-2-naphthoate biosynthesis; 1,4-dihydroxy-2-naphthoate from chorismate: step 2/7. Its pathway is cofactor biosynthesis; phylloquinone biosynthesis. Its function is as follows. Catalyzes the thiamine diphosphate-dependent decarboxylation of 2-oxoglutarate and the subsequent addition of the resulting succinic semialdehyde-thiamine pyrophosphate anion to isochorismate to yield 2-succinyl-5-enolpyruvyl-6-hydroxy-3-cyclohexene-1-carboxylate (SEPHCHC). In Gloeothece citriformis (strain PCC 7424) (Cyanothece sp. (strain PCC 7424)), this protein is 2-succinyl-5-enolpyruvyl-6-hydroxy-3-cyclohexene-1-carboxylate synthase.